The primary structure comprises 157 residues: Phosphopantetheine adenylyltransferase (157 aa).

Belongs to the eukaryotic CoaD family.

The protein resides in the cytoplasm. It catalyses the reaction (R)-4'-phosphopantetheine + ATP + H(+) = 3'-dephospho-CoA + diphosphate. Its pathway is cofactor biosynthesis; coenzyme A biosynthesis. Functionally, reversibly transfers an adenylyl group from ATP to 4'-phosphopantetheine, yielding dephospho-CoA (dPCoA) and pyrophosphate. The protein is Phosphopantetheine adenylyltransferase of Methanopyrus kandleri (strain AV19 / DSM 6324 / JCM 9639 / NBRC 100938).